We begin with the raw amino-acid sequence, 375 residues long: CLIP domain-containing serine protease B14 (375 aa).

An N-terminal signal peptide occupies residues Met-1–Gly-24. The Clip domain occupies Pro-29–Cys-83. Disulfide bonds link Cys-30–Cys-82, Cys-40–Cys-71, and Cys-46–Cys-83. Asn-34 is a glycosylation site (N-linked (GlcNAc...) asparagine). The 270-residue stretch at Ile-101 to Phe-370 folds into the Peptidase S1 domain. A glycan (N-linked (GlcNAc...) asparagine) is linked at Asn-105. A disulfide bond links Cys-131 and Cys-147. Catalysis depends on charge relay system residues His-146 and Asp-213. Asn-238 carries an N-linked (GlcNAc...) asparagine glycan. 2 cysteine pairs are disulfide-bonded: Cys-289–Cys-307 and Cys-317–Cys-346. The active-site Charge relay system is the Ser-321. Asn-357 carries an N-linked (GlcNAc...) asparagine glycan.

Belongs to the peptidase S1 family. CLIP subfamily. In terms of processing, N-glycosylated. Post-translationally, proteolytically cleaved. In terms of tissue distribution, expressed by a subpopulation of hemocytes.

The protein resides in the secreted. Serine protease. Plays a role in innate immunity against infections by parasite P.berghei and by Gram-negative bacteria such as E.coli. In response to P.berghei infection, contributes to the clearing of parasite ookinetes independent of melanization, an innate immune response which consists in the deposition of melanin pigments on invading pathogens and parasites. May play a role in non-septic wound healing. The protein is CLIP domain-containing serine protease B14 of Anopheles gambiae (African malaria mosquito).